A 232-amino-acid chain; its full sequence is Putative uridine kinase DAS2 (232 aa).

Residue 17–24 (GGHATGVG) coordinates ATP.

It belongs to the uridine kinase family.

It localises to the cytoplasm. Its subcellular location is the nucleus. It catalyses the reaction uridine + ATP = UMP + ADP + H(+). It carries out the reaction cytidine + ATP = CMP + ADP + H(+). It functions in the pathway pyrimidine metabolism; CTP biosynthesis via salvage pathway; CTP from cytidine: step 1/3. It participates in pyrimidine metabolism; UMP biosynthesis via salvage pathway; UMP from uridine: step 1/1. Its function is as follows. Putative uridine kinase identified in a screen for mutants with increased levels of rDNA transcription. This chain is Putative uridine kinase DAS2 (DAS2), found in Saccharomyces cerevisiae (strain ATCC 204508 / S288c) (Baker's yeast).